A 220-amino-acid chain; its full sequence is Lipoprotein-releasing system ATP-binding protein LolD (220 aa).

The ABC transporter domain maps to 1–220 (MRAVDIHKSY…YRMKDGQWQS (220 aa)). 37 to 44 (GASGAGKS) provides a ligand contact to ATP.

This sequence belongs to the ABC transporter superfamily. Lipoprotein translocase (TC 3.A.1.125) family. The complex is composed of two ATP-binding proteins (LolD) and two transmembrane proteins (LolC and LolE).

The protein localises to the cell inner membrane. Functionally, part of the ABC transporter complex LolCDE involved in the translocation of mature outer membrane-directed lipoproteins, from the inner membrane to the periplasmic chaperone, LolA. Responsible for the formation of the LolA-lipoprotein complex in an ATP-dependent manner. This Bdellovibrio bacteriovorus (strain ATCC 15356 / DSM 50701 / NCIMB 9529 / HD100) protein is Lipoprotein-releasing system ATP-binding protein LolD.